A 421-amino-acid chain; its full sequence is Tol-Pal system protein TolA (421 aa).

Residues 1–13 are Cytoplasmic-facing; it reads MSKATEQNDKLKR. The chain crosses the membrane as a helical span at residues 14-34; the sequence is AIIISAVLHVILFAALIWSSF. The Periplasmic segment spans residues 35–421; the sequence is DENIEASAGG…FKNAPLDFKP (387 aa). The interval 48–310 is domain II (alpha-helical); that stretch reads SSIDAVMVDS…LSSGKNAPKT (263 aa). The segment at 65–266 is disordered; sequence KRMQSQESSA…KAAADKKAAA (202 aa). 2 stretches are compositionally biased toward basic and acidic residues: residues 73-175 and 206-266; these read SAKR…EAEA and EARK…KAAA. Tandem repeats lie at residues 224-229, 230-234, 235-240, 241-245, 246-250, 251-255, 256-260, 261-266, 267-271, 272-277, 278-282, 283-287, and 288-292. A 13 X tandem repeats of [EDA]-K(1,2)-A(2,4) region spans residues 224 to 292; that stretch reads EKKAAAEKAA…EKAAAAKAAA (69 aa). The segment at 300–336 is disordered; it reads ELSSGKNAPKTGGGAKGNNASPAGSGNTKNNGASGAD. The segment at 311 to 421 is domain III (functional); it reads GGGAKGNNAS…FKNAPLDFKP (111 aa). Polar residues predominate over residues 317 to 332; it reads NNASPAGSGNTKNNGA. Cys363 and Cys388 are oxidised to a cystine.

It belongs to the TolA family. As to quaternary structure, the Tol-Pal system is composed of five core proteins: the inner membrane proteins TolA, TolQ and TolR, the periplasmic protein TolB and the outer membrane protein Pal. They form a network linking the inner and outer membranes and the peptidoglycan layer. TolA interacts with TolQ and TolR via its N-terminal domain. Interacts with CpoB, and with the trimeric porins OmpC, OmpF, PhoE and LamB via its central domain. Interacts with TolB via its C-terminal domain. Also interacts with Pal via its C-terminal domain. This interaction is proton motive force dependent and requires TolQ and TolR.

It localises to the cell inner membrane. Part of the Tol-Pal system, which plays a role in outer membrane invagination during cell division and is important for maintaining outer membrane integrity. The Tol-Pal system is also required for polar localization of chemoreceptors clusters. The system also appears to be required for the activity of several outer membrane-localized enzymes with cell wall remodeling activity. Is involved in the uptake of group A colicins (colicins A, E1, E2, E3, and K) and in the uptake of filamentous phage DNA. In Escherichia coli (strain K12), this protein is Tol-Pal system protein TolA.